The sequence spans 193 residues: 3-isopropylmalate dehydratase small subunit (193 aa).

Belongs to the LeuD family. LeuD type 1 subfamily. In terms of assembly, heterodimer of LeuC and LeuD.

The enzyme catalyses (2R,3S)-3-isopropylmalate = (2S)-2-isopropylmalate. It functions in the pathway amino-acid biosynthesis; L-leucine biosynthesis; L-leucine from 3-methyl-2-oxobutanoate: step 2/4. In terms of biological role, catalyzes the isomerization between 2-isopropylmalate and 3-isopropylmalate, via the formation of 2-isopropylmaleate. The sequence is that of 3-isopropylmalate dehydratase small subunit from Bacillus cereus (strain ZK / E33L).